We begin with the raw amino-acid sequence, 289 residues long: DegV domain-containing protein YteA (289 aa).

The 282-residue stretch at 3 to 284 (FQIMTDSTAD…DGTIAIFSIS (282 aa)) folds into the DegV domain. Hexadecanoate is bound by residues Thr62 and Ser94.

In terms of biological role, may bind long-chain fatty acids, such as palmitate, and may play a role in lipid transport or fatty acid metabolism. This Lactococcus lactis subsp. lactis (strain IL1403) (Streptococcus lactis) protein is DegV domain-containing protein YteA (yteA).